A 168-amino-acid polypeptide reads, in one-letter code: Cysteine-rich perinuclear theca protein 1 (168 aa).

The interval asparagine 144–serine 168 is disordered.

Specifically expressed in spermatozoa (at protein level). Detected from the elongated spermatid stage onwards; not found in immature germ cells or somatic cells (at protein level).

The protein localises to the cytoplasm. The protein resides in the cytoskeleton. Its subcellular location is the perinuclear theca. In Mus musculus (Mouse), this protein is Cysteine-rich perinuclear theca protein 1.